Consider the following 129-residue polypeptide: uncharacterized protein (129 aa).

The protein resides in the cytoplasm. It is found in the cytosol. Its subcellular location is the nucleus. This is an uncharacterized protein from Schizosaccharomyces pombe (strain 972 / ATCC 24843) (Fission yeast).